The chain runs to 178 residues: N-alpha-acetyltransferase 20 (178 aa).

One can recognise an N-acetyltransferase domain in the interval 2–157 (TTLRAFTCDD…DAYDMRKALS (156 aa)).

Belongs to the acetyltransferase family. ARD1 subfamily. As to quaternary structure, component of the N-terminal acetyltransferase B (NatB) complex which is composed of NAA20 and NAA25.

The protein resides in the cytoplasm. The protein localises to the nucleus. The catalysed reaction is N-terminal L-methionyl-L-asparaginyl-[protein] + acetyl-CoA = N-terminal N(alpha)-acetyl-L-methionyl-L-asparaginyl-[protein] + CoA + H(+). It catalyses the reaction N-terminal L-methionyl-L-glutaminyl-[protein] + acetyl-CoA = N-terminal N(alpha)-acetyl-L-methionyl-L-glutaminyl-[protein] + CoA + H(+). It carries out the reaction N-terminal L-methionyl-L-aspartyl-[protein] + acetyl-CoA = N-terminal N(alpha)-acetyl-L-methionyl-L-aspartyl-[protein] + CoA + H(+). The enzyme catalyses N-terminal L-methionyl-L-glutamyl-[protein] + acetyl-CoA = N-terminal N(alpha)-acetyl-L-methionyl-L-glutamyl-[protein] + CoA + H(+). Catalytic subunit of the NatB complex which catalyzes acetylation of the N-terminal methionine residues of peptides beginning with Met-Asp, Met-Glu, Met-Asn and Met-Gln. Proteins with cell cycle functions are overrepresented in the pool of NatB substrates. Required for maintaining the structure and function of actomyosin fibers and for proper cellular migration. This Homo sapiens (Human) protein is N-alpha-acetyltransferase 20 (NAA20).